Here is a 364-residue protein sequence, read N- to C-terminus: UDP-N-acetylglucosamine--N-acetylmuramyl-(pentapeptide) pyrophosphoryl-undecaprenol N-acetylglucosamine transferase (364 aa).

UDP-N-acetyl-alpha-D-glucosamine-binding positions include 10-12 (TGG), asparagine 128, arginine 170, serine 199, isoleucine 250, and glutamine 295.

The protein belongs to the glycosyltransferase 28 family. MurG subfamily.

It localises to the cell inner membrane. It carries out the reaction di-trans,octa-cis-undecaprenyl diphospho-N-acetyl-alpha-D-muramoyl-L-alanyl-D-glutamyl-meso-2,6-diaminopimeloyl-D-alanyl-D-alanine + UDP-N-acetyl-alpha-D-glucosamine = di-trans,octa-cis-undecaprenyl diphospho-[N-acetyl-alpha-D-glucosaminyl-(1-&gt;4)]-N-acetyl-alpha-D-muramoyl-L-alanyl-D-glutamyl-meso-2,6-diaminopimeloyl-D-alanyl-D-alanine + UDP + H(+). The protein operates within cell wall biogenesis; peptidoglycan biosynthesis. Its function is as follows. Cell wall formation. Catalyzes the transfer of a GlcNAc subunit on undecaprenyl-pyrophosphoryl-MurNAc-pentapeptide (lipid intermediate I) to form undecaprenyl-pyrophosphoryl-MurNAc-(pentapeptide)GlcNAc (lipid intermediate II). The sequence is that of UDP-N-acetylglucosamine--N-acetylmuramyl-(pentapeptide) pyrophosphoryl-undecaprenol N-acetylglucosamine transferase from Chlorobaculum tepidum (strain ATCC 49652 / DSM 12025 / NBRC 103806 / TLS) (Chlorobium tepidum).